We begin with the raw amino-acid sequence, 272 residues long: Ribosomal RNA small subunit methyltransferase A (272 aa).

S-adenosyl-L-methionine is bound by residues Asn18, Leu20, Gly45, Glu66, Asp91, and Asn113.

The protein belongs to the class I-like SAM-binding methyltransferase superfamily. rRNA adenine N(6)-methyltransferase family. RsmA subfamily.

It localises to the cytoplasm. It carries out the reaction adenosine(1518)/adenosine(1519) in 16S rRNA + 4 S-adenosyl-L-methionine = N(6)-dimethyladenosine(1518)/N(6)-dimethyladenosine(1519) in 16S rRNA + 4 S-adenosyl-L-homocysteine + 4 H(+). Specifically dimethylates two adjacent adenosines (A1518 and A1519) in the loop of a conserved hairpin near the 3'-end of 16S rRNA in the 30S particle. May play a critical role in biogenesis of 30S subunits. This chain is Ribosomal RNA small subunit methyltransferase A, found in Serratia proteamaculans (strain 568).